Here is a 203-residue protein sequence, read N- to C-terminus: Glycerol-3-phosphate acyltransferase (203 aa).

The next 6 membrane-spanning stretches (helical) occupy residues 3 to 23, 51 to 71, 74 to 94, 116 to 136, 140 to 160, and 164 to 178; these read ILLATVAAYLIGSVSFAVVVS, KAAILTLVGDAFKGWLAVWLV, FGIGGEIGVALAAIAVFLGHL, AVHPVLGLATALTWLIVAFFF, SLAALVAAVFAPIFDVFLFGT, and PVAWAVLAMSVLLIW.

This sequence belongs to the PlsY family. As to quaternary structure, probably interacts with PlsX.

It is found in the cell inner membrane. It catalyses the reaction an acyl phosphate + sn-glycerol 3-phosphate = a 1-acyl-sn-glycero-3-phosphate + phosphate. Its pathway is lipid metabolism; phospholipid metabolism. In terms of biological role, catalyzes the transfer of an acyl group from acyl-phosphate (acyl-PO(4)) to glycerol-3-phosphate (G3P) to form lysophosphatidic acid (LPA). This enzyme utilizes acyl-phosphate as fatty acyl donor, but not acyl-CoA or acyl-ACP. This is Glycerol-3-phosphate acyltransferase from Burkholderia mallei (strain ATCC 23344).